We begin with the raw amino-acid sequence, 97 residues long: HssA/B-like protein 47 (97 aa).

Positions 1–33 (MTLFSSISSISNPMTSSKSSIASFGSGTSMSSN) are disordered.

This sequence belongs to the hssA/B family.

The polypeptide is HssA/B-like protein 47 (hssl47) (Dictyostelium discoideum (Social amoeba)).